We begin with the raw amino-acid sequence, 33 residues long: Photosystem II reaction center protein Psb30 (33 aa).

Residues 5–25 (LIVQLGSLTLITLAGPLVVVL) traverse the membrane as a helical segment.

The protein belongs to the Psb30/Ycf12 family. PSII is composed of 1 copy each of membrane proteins PsbA, PsbB, PsbC, PsbD, PsbE, PsbF, PsbH, PsbI, PsbJ, PsbK, PsbL, PsbM, PsbT, PsbY, PsbZ, Psb30/Ycf12, peripheral proteins of the oxygen-evolving complex and a large number of cofactors. It forms dimeric complexes.

It localises to the plastid. It is found in the chloroplast thylakoid membrane. A core subunit of photosystem II (PSII), probably helps stabilize the reaction center. The sequence is that of Photosystem II reaction center protein Psb30 from Euglena deses.